A 395-amino-acid chain; its full sequence is Beta-1,4-galactosyltransferase 3 (395 aa).

Residues 1–10 (MLRRLLERPC) lie on the Cytoplasmic side of the membrane. Residues 11-31 (TLALLVGSQLAVMMYLSLGGF) form a helical; Signal-anchor for type II membrane protein membrane-spanning segment. At 32-395 (RSLSALFGRD…ANHTAPHGSH (364 aa)) the chain is on the lumenal side. Residue asparagine 57 is glycosylated (N-linked (GlcNAc...) asparagine). An intrachain disulfide couples cysteine 79 to cysteine 121. 132 to 136 (PHRAR) contributes to the UDP-alpha-D-galactose binding site. The N-linked (GlcNAc...) asparagine glycan is linked to asparagine 168. UDP-alpha-D-galactose-binding positions include 171-173 (FNR), 198-199 (VD), tyrosine 228, and tryptophan 260. A disulfide bridge connects residues cysteine 192 and cysteine 211. Aspartate 199 lines the Mn(2+) pocket. Residue 262–265 (GEDD) participates in N-acetyl-D-glucosamine binding. Histidine 293 provides a ligand contact to Mn(2+). 293–295 (HRG) is a UDP-alpha-D-galactose binding site. Position 305 (arginine 305) interacts with N-acetyl-D-glucosamine. Asparagine 339 and asparagine 387 each carry an N-linked (GlcNAc...) asparagine glycan. Residues 341–395 (TADIGTDPRGPRAPSGPRYPPGSSQAFRQEMLQRRPPARPGPLPTANHTAPHGSH) are disordered.

The protein belongs to the glycosyltransferase 7 family. Requires Mn(2+) as cofactor.

It localises to the golgi apparatus. Its subcellular location is the golgi stack membrane. It carries out the reaction an N-acetyl-beta-D-glucosaminyl derivative + UDP-alpha-D-galactose = a beta-D-galactosyl-(1-&gt;4)-N-acetyl-beta-D-glucosaminyl derivative + UDP + H(+). The enzyme catalyses N-acetyl-D-glucosamine + UDP-alpha-D-galactose = beta-D-galactosyl-(1-&gt;4)-N-acetyl-D-glucosamine + UDP + H(+). It catalyses the reaction a beta-D-GlcNAc-(1-&gt;3)-beta-D-Gal-(1-&gt;4)-beta-D-Glc-(1&lt;-&gt;1)-Cer(d18:1(4E)) + UDP-alpha-D-galactose = a neolactoside nLc4Cer(d18:1(4E)) + UDP + H(+). The catalysed reaction is a beta-D-glucosylceramide + UDP-alpha-D-galactose = a beta-D-galactosyl-(1-&gt;4)-beta-D-glucosyl-(1&lt;-&gt;1)-ceramide + UDP + H(+). It carries out the reaction a neolactoside IV(3)-beta-GlcNAc-nLc4Cer + UDP-alpha-D-galactose = a neolactoside nLc6Cer + UDP + H(+). It functions in the pathway protein modification; protein glycosylation. Its function is as follows. Responsible for the synthesis of complex-type N-linked oligosaccharides in many glycoproteins as well as the carbohydrate moieties of glycolipids. This Rattus norvegicus (Rat) protein is Beta-1,4-galactosyltransferase 3.